Consider the following 308-residue polypeptide: Tetraacyldisaccharide 4'-kinase (308 aa).

ATP is bound at residue 63 to 70 (SFGGNGKT).

The protein belongs to the LpxK family.

The catalysed reaction is a lipid A disaccharide + ATP = a lipid IVA + ADP + H(+). It participates in glycolipid biosynthesis; lipid IV(A) biosynthesis; lipid IV(A) from (3R)-3-hydroxytetradecanoyl-[acyl-carrier-protein] and UDP-N-acetyl-alpha-D-glucosamine: step 6/6. In terms of biological role, transfers the gamma-phosphate of ATP to the 4'-position of a tetraacyldisaccharide 1-phosphate intermediate (termed DS-1-P) to form tetraacyldisaccharide 1,4'-bis-phosphate (lipid IVA). The sequence is that of Tetraacyldisaccharide 4'-kinase from Campylobacter jejuni subsp. jejuni serotype O:2 (strain ATCC 700819 / NCTC 11168).